A 486-amino-acid chain; its full sequence is O-methyltransferase gedA (486 aa).

Residues 298-299 (GG), D321, 353-354 (SF), and R369 each bind S-adenosyl-L-methionine. Residue H373 is the Proton acceptor of the active site.

This sequence belongs to the class I-like SAM-binding methyltransferase superfamily. Cation-independent O-methyltransferase family.

The enzyme catalyses emodin + S-adenosyl-L-methionine = questin + S-adenosyl-L-homocysteine + H(+). It functions in the pathway secondary metabolite biosynthesis. O-methyltransferase; part of the gene cluster that mediates the biosynthesis of geodin, an intermediate in the biosynthesis of other natural products. The pathway begins with the synthesis of atrochrysone thioester by the polyketide synthase (PKS) gedC. The atrochrysone carboxyl ACP thioesterase gedB then breaks the thioester bond and releases the atrochrysone carboxylic acid from gedC. The atrochrysone carboxylic acid is then converted to atrochrysone which is further transformed into emodinanthrone. The next step is performed by the emodinanthrone oxygenase gedH that catalyzes the oxidation of emodinanthrone to emodin. Emodin O-methyltransferase encoded probably by gedA then catalyzes methylation of the 8-hydroxy group of emodin to form questin. Ring cleavage of questin by questin oxidase gedK leads to desmethylsulochrin via several intermediates including questin epoxide. Another methylation step probably catalyzed by methyltransferase gedG leads to the formation of sulochrin which is further converted to dihydrogeodin by the sulochrin halogenase gedL. Finally, the dihydrogeodin oxidase gedJ catalyzes the stereospecific phenol oxidative coupling reaction converting dihydrogeodin to geodin. This Aspergillus terreus (strain NIH 2624 / FGSC A1156) protein is O-methyltransferase gedA.